A 196-amino-acid chain; its full sequence is MDKVILVLLMSLGASSQPLTDTPRLFSMAVSRVQHLHLLAQRLFADFESSLQTDEQRQLNKKFLPFCNSDSIISPNDKHETQRSSVLKLLSISYRLIESWDFPSLSLSGGLSPKLSDLKTGILLLIKASQDGADMFSESTTLQLGPYENYYQNLGGEEPLKRTYELLTCFKKDMHKVETYLTVAKCRLSPEANCTL.

The first 16 residues, 1-16 (MDKVILVLLMSLGASS), serve as a signal peptide directing secretion. At Gln17 the chain carries Pyrrolidone carboxylic acid. His35 lines the Zn(2+) pocket. An intrachain disulfide couples Cys67 to Cys169. Position 178 (Glu178) interacts with Zn(2+). Cysteines 186 and 194 form a disulfide.

The protein belongs to the somatotropin/prolactin family.

The protein resides in the secreted. Functionally, growth hormone plays an important role in growth control and is involved in the regulation of several anabolic processes. Implicated as an osmoregulatory substance important for seawater adaptation. The polypeptide is Somatotropin (gh) (Takifugu rubripes (Japanese pufferfish)).